A 285-amino-acid chain; its full sequence is Bifunctional protein FolD (285 aa).

Residues 166-168 and Ile-232 each bind NADP(+); that span reads GAS.

This sequence belongs to the tetrahydrofolate dehydrogenase/cyclohydrolase family. In terms of assembly, homodimer.

It carries out the reaction (6R)-5,10-methylene-5,6,7,8-tetrahydrofolate + NADP(+) = (6R)-5,10-methenyltetrahydrofolate + NADPH. The enzyme catalyses (6R)-5,10-methenyltetrahydrofolate + H2O = (6R)-10-formyltetrahydrofolate + H(+). It functions in the pathway one-carbon metabolism; tetrahydrofolate interconversion. Functionally, catalyzes the oxidation of 5,10-methylenetetrahydrofolate to 5,10-methenyltetrahydrofolate and then the hydrolysis of 5,10-methenyltetrahydrofolate to 10-formyltetrahydrofolate. This Baumannia cicadellinicola subsp. Homalodisca coagulata protein is Bifunctional protein FolD.